The following is a 391-amino-acid chain: Coiled-coil domain-containing protein 85C-A (391 aa).

Coiled-coil stretches lie at residues 23–87 and 121–146; these read KCSK…ELCC and FQQK…KEII. The interval 154–212 is disordered; the sequence is NGAGSRSSIDSQSSLSNLNGGSATVRDVGDGSSTSSTGSAGSPDHHHSHIHKPTEGKIT. Low complexity-rich tracts occupy residues 158-175 and 183-195; these read SRSS…NGGS and DGSS…SAGS.

It belongs to the CCDC85 family.

Its subcellular location is the cell junction. It is found in the tight junction. It localises to the adherens junction. Its function is as follows. May play a role in cell-cell adhesion and epithelium development through its interaction with proteins of the beta-catenin family. May play an important role in cortical development, especially in the maintenance of radial glia. The protein is Coiled-coil domain-containing protein 85C-A (ccdc85ca) of Danio rerio (Zebrafish).